We begin with the raw amino-acid sequence, 61 residues long: Conotoxin TxMRCL-04 (61 aa).

A signal peptide spans 1–22 (MRCLPVFVILLLLIASTPSVDA). The propeptide occupies 23-46 (QLKTKDDMSLASFHDNVKRILQIR).

Belongs to the conotoxin T superfamily. Post-translationally, contains 2 disulfide bonds that can be either 'C1-C3, C2-C4' or 'C1-C4, C2-C3', since these disulfide connectivities have been observed for conotoxins with cysteine framework V (for examples, see AC P0DQQ7 and AC P81755). As to expression, expressed by the venom duct.

The protein resides in the secreted. This Conus textile (Cloth-of-gold cone) protein is Conotoxin TxMRCL-04.